The following is a 723-amino-acid chain: Zinc finger CCCH domain-containing protein 11A (723 aa).

3 C3H1-type zinc fingers span residues 2-29 (SKQGDDCYFYFYSTCNKGDNCPFRHCEA), 31-57 (LGNETICTLWKEGRCFRNVCRFRHMEI), and 60-87 (KRSEIPCFWENQPGGCQKSNCAFHHTKG). 5 disordered regions span residues 142-208 (ENSE…KQDD), 223-256 (KKQKEKTKKQSEGPSGVPAHPLQSRTVPVPEKEN), 404-428 (KRAEGERKKQRILPPSVPGKVKLEE), 450-526 (EKAL…VKSL), and 565-681 (VKPS…APLS). The span at 160-175 (ADDDEDDDDQLSEEGE) shows a compositional bias: acidic residues. Residues 376–411 (KTFSEALAERKQRRLEEEKQKLEEFLTEKRAEGERK) adopt a coiled-coil conformation. The span at 511-522 (PSNQSAPNSKAQ) shows a compositional bias: polar residues. Residues 609–620 (KKAALTAAPALP) are compositionally biased toward low complexity. A compositionally biased stretch (polar residues) spans 637–649 (LELQLGSQADSVE). Residues 650–672 (QSGDSSSASASSQSVAKAQQLSS) are compositionally biased toward low complexity.

Its subcellular location is the nucleus speckle. In terms of biological role, through its association with TREX complex components, may participate in the export and post-transcriptional coordination of selected mRNA transcripts. Binds RNA. The sequence is that of Zinc finger CCCH domain-containing protein 11A (ZC3H11A) from Gallus gallus (Chicken).